The chain runs to 176 residues: Large ribosomal subunit protein uL6 (176 aa).

This sequence belongs to the universal ribosomal protein uL6 family. In terms of assembly, part of the 50S ribosomal subunit.

This protein binds to the 23S rRNA, and is important in its secondary structure. It is located near the subunit interface in the base of the L7/L12 stalk, and near the tRNA binding site of the peptidyltransferase center. The chain is Large ribosomal subunit protein uL6 from Burkholderia ambifaria (strain MC40-6).